A 205-amino-acid chain; its full sequence is Thiamine-phosphate synthase (205 aa).

Residues 37 to 41 (QVREK) and N69 each bind 4-amino-2-methyl-5-(diphosphooxymethyl)pyrimidine. Mg(2+) contacts are provided by D70 and D89. S108 contacts 4-amino-2-methyl-5-(diphosphooxymethyl)pyrimidine. A 2-[(2R,5Z)-2-carboxy-4-methylthiazol-5(2H)-ylidene]ethyl phosphate-binding site is contributed by 134–136 (TGS). A 4-amino-2-methyl-5-(diphosphooxymethyl)pyrimidine-binding site is contributed by K137. 2-[(2R,5Z)-2-carboxy-4-methylthiazol-5(2H)-ylidene]ethyl phosphate is bound by residues G165 and 185 to 186 (IS).

This sequence belongs to the thiamine-phosphate synthase family. Mg(2+) serves as cofactor.

The catalysed reaction is 2-[(2R,5Z)-2-carboxy-4-methylthiazol-5(2H)-ylidene]ethyl phosphate + 4-amino-2-methyl-5-(diphosphooxymethyl)pyrimidine + 2 H(+) = thiamine phosphate + CO2 + diphosphate. It catalyses the reaction 2-(2-carboxy-4-methylthiazol-5-yl)ethyl phosphate + 4-amino-2-methyl-5-(diphosphooxymethyl)pyrimidine + 2 H(+) = thiamine phosphate + CO2 + diphosphate. It carries out the reaction 4-methyl-5-(2-phosphooxyethyl)-thiazole + 4-amino-2-methyl-5-(diphosphooxymethyl)pyrimidine + H(+) = thiamine phosphate + diphosphate. It functions in the pathway cofactor biosynthesis; thiamine diphosphate biosynthesis; thiamine phosphate from 4-amino-2-methyl-5-diphosphomethylpyrimidine and 4-methyl-5-(2-phosphoethyl)-thiazole: step 1/1. Functionally, condenses 4-methyl-5-(beta-hydroxyethyl)thiazole monophosphate (THZ-P) and 2-methyl-4-amino-5-hydroxymethyl pyrimidine pyrophosphate (HMP-PP) to form thiamine monophosphate (TMP). In Clostridium botulinum (strain ATCC 19397 / Type A), this protein is Thiamine-phosphate synthase.